A 31-amino-acid polypeptide reads, in one-letter code: Hemocyanin subunit 1 (31 aa).

It belongs to the tyrosinase family. Hemocyanin subfamily. As to expression, hemolymph.

The protein resides in the secreted. It is found in the extracellular space. Hemocyanins are copper-containing oxygen carriers occurring freely dissolved in the hemolymph of many mollusks and arthropods. The protein is Hemocyanin subunit 1 of Homarus americanus (American lobster).